The primary structure comprises 67 residues: DNA-directed RNA polymerase subunit omega (67 aa).

This sequence belongs to the RNA polymerase subunit omega family. In terms of assembly, the RNAP catalytic core consists of 2 alpha, 1 beta, 1 beta' and 1 omega subunit. When a sigma factor is associated with the core the holoenzyme is formed, which can initiate transcription.

The enzyme catalyses RNA(n) + a ribonucleoside 5'-triphosphate = RNA(n+1) + diphosphate. Functionally, promotes RNA polymerase assembly. Latches the N- and C-terminal regions of the beta' subunit thereby facilitating its interaction with the beta and alpha subunits. This Listeria innocua serovar 6a (strain ATCC BAA-680 / CLIP 11262) protein is DNA-directed RNA polymerase subunit omega.